The chain runs to 190 residues: MAKSEAPINLTNQFLIAMPGMADPTFSGSVVYLCEHNERGALGLVINRPIDIDMATLFDKIDLKLEIQPVAHQPVYFGGPVQTERGFVLHDPVGIYVSSLAVPGGLEMTTSKDVLEAVANGSGPHRFLLTLGYSGWGAGQLEDELSRNGWLTVQADPEIIFSVPPEERFSAAIRLLGIDITMLSGEAGHA.

It belongs to the UPF0301 (AlgH) family.

In Cupriavidus pinatubonensis (strain JMP 134 / LMG 1197) (Cupriavidus necator (strain JMP 134)), this protein is UPF0301 protein Reut_A0705.